The chain runs to 374 residues: Type IV secretion system protein PtlG homolog (374 aa).

Residues 38–56 (WMFALVAVALSCLLATGIW) traverse the membrane as a helical segment. The segment at 86 to 117 (HPREPEPAPLPDMPAAPDPILPQPRPAPPVPP) is disordered. Residues 92-117 (PAPLPDMPAAPDPILPQPRPAPPVPP) show a composition bias toward pro residues.

This sequence belongs to the TrbI/VirB10 family.

It is found in the cell membrane. This is Type IV secretion system protein PtlG homolog (ptlG) from Bordetella bronchiseptica (strain ATCC BAA-588 / NCTC 13252 / RB50) (Alcaligenes bronchisepticus).